A 187-amino-acid chain; its full sequence is Interferon beta (187 aa).

A signal peptide spans 1–21 (MTSRSLLPFVLSLLLPRIIMA). Tyr24 carries the post-translational modification Phosphotyrosine. Cys53 and Cys162 are disulfide-bonded. Asn76, Asn95, Asn132, and Asn158 each carry an N-linked (GlcNAc...) asparagine glycan.

The protein belongs to the alpha/beta interferon family. As to quaternary structure, monomer.

The protein localises to the secreted. Functionally, type I interferon cytokine that plays a key role in the innate immune response to infection, developing tumors and other inflammatory stimuli. Signals via binding to high-affinity (IFNAR2) and low-affinity (IFNAR1) heterodimeric receptor, activating the canonical Jak-STAT signaling pathway resulting in transcriptional activation or repression of interferon-regulated genes that encode the effectors of the interferon response, such as antiviral proteins, regulators of cell proliferation and differentiation, and immunoregulatory proteins. Signals mostly via binding to a IFNAR1-IFNAR2 heterodimeric receptor, but can also function with IFNAR1 alone and independently of Jak-STAT pathways. Elicits a wide variety of responses, including antiviral and antibacterial activities, and can regulate the development of B-cells, myelopoiesis and lipopolysaccharide (LPS)-inducible production of tumor necrosis factor. Plays a role in neuronal homeostasis by regulating dopamine turnover and protecting dopaminergic neurons: acts by promoting neuronal autophagy and alpha-synuclein clearance, thereby preventing dopaminergic neuron loss. IFNB1 is more potent than interferon-alpha (IFN-alpha) in inducing the apoptotic and antiproliferative pathways required for control of tumor cell growth. This chain is Interferon beta (IFNB1), found in Tachyglossus aculeatus aculeatus (Southeast Australian short-beaked echidna).